Here is a 124-residue protein sequence, read N- to C-terminus: UPF0231 protein Shewmr4_0656 (124 aa).

The protein belongs to the UPF0231 family.

The sequence is that of UPF0231 protein Shewmr4_0656 from Shewanella sp. (strain MR-4).